A 431-amino-acid polypeptide reads, in one-letter code: Glutamate-1-semialdehyde 2,1-aminomutase (431 aa).

Lysine 265 bears the N6-(pyridoxal phosphate)lysine mark.

This sequence belongs to the class-III pyridoxal-phosphate-dependent aminotransferase family. HemL subfamily. Homodimer. Pyridoxal 5'-phosphate serves as cofactor.

The protein resides in the cytoplasm. It carries out the reaction (S)-4-amino-5-oxopentanoate = 5-aminolevulinate. The protein operates within porphyrin-containing compound metabolism; protoporphyrin-IX biosynthesis; 5-aminolevulinate from L-glutamyl-tRNA(Glu): step 2/2. This is Glutamate-1-semialdehyde 2,1-aminomutase from Aliivibrio fischeri (strain ATCC 700601 / ES114) (Vibrio fischeri).